Here is a 68-residue protein sequence, read N- to C-terminus: Sec-independent protein translocase protein TatA (68 aa).

The chain crosses the membrane as a helical span at residues Met-1–Gly-21. The segment at Gly-42 to Lys-68 is disordered. The span at Asp-56–Lys-68 shows a compositional bias: basic and acidic residues.

Belongs to the TatA/E family. The Tat system comprises two distinct complexes: a TatABC complex, containing multiple copies of TatA, TatB and TatC subunits, and a separate TatA complex, containing only TatA subunits. Substrates initially bind to the TatABC complex, which probably triggers association of the separate TatA complex to form the active translocon.

It localises to the cell inner membrane. Its function is as follows. Part of the twin-arginine translocation (Tat) system that transports large folded proteins containing a characteristic twin-arginine motif in their signal peptide across membranes. TatA could form the protein-conducting channel of the Tat system. The chain is Sec-independent protein translocase protein TatA from Chromobacterium violaceum (strain ATCC 12472 / DSM 30191 / JCM 1249 / CCUG 213 / NBRC 12614 / NCIMB 9131 / NCTC 9757 / MK).